The sequence spans 455 residues: tRNA modification GTPase MnmE (455 aa).

(6S)-5-formyl-5,6,7,8-tetrahydrofolate is bound by residues Arg24, Glu81, and Lys121. In terms of domain architecture, TrmE-type G spans Gly217–Gly378. Asn227 is a K(+) binding site. GTP-binding positions include Asn227–Ser232, Thr246–Thr252, Asp271–Gly274, and Ser359–Arg361. Ser231 contacts Mg(2+). K(+) contacts are provided by Thr246, Ile248, and Thr251. Mg(2+) is bound at residue Thr252. Lys455 provides a ligand contact to (6S)-5-formyl-5,6,7,8-tetrahydrofolate.

The protein belongs to the TRAFAC class TrmE-Era-EngA-EngB-Septin-like GTPase superfamily. TrmE GTPase family. Homodimer. Heterotetramer of two MnmE and two MnmG subunits. The cofactor is K(+).

Its subcellular location is the cytoplasm. In terms of biological role, exhibits a very high intrinsic GTPase hydrolysis rate. Involved in the addition of a carboxymethylaminomethyl (cmnm) group at the wobble position (U34) of certain tRNAs, forming tRNA-cmnm(5)s(2)U34. This is tRNA modification GTPase MnmE from Photobacterium profundum (strain SS9).